The primary structure comprises 475 residues: MKRWPVFPRSLRQLVMLAFLLILLPLLVLAWQAWQSLNALSDQAALVNRTTLIDARRSEAMTNAALEMERSYRQYCVLDDPTLAKVYQSQRKRYSEMLDAHAGVLPDDKLYQALRQDLHNLAQLQCNNSGPDAAAAARLEAFASANTEMVQATRTVVFSRGQQLQREIAERGQYFGWQSLVLFLVSLVMVLLFTRMIIGPVKNIERMINRLGEGRSLGNSVSFSGPSELRSVGQRILWLSERLSWLESQRHQFLRHLSHELKTPLASMREGTELLADQVVGPLTPEQKEVVSILDSSSRNLQKLIEQLLDYNRKQADSAVELENVELAPLVETVVSAHSLPARAKMMHTDVDLKATACLAEPMLLMSVLDNLYSNAVHYGAESGNICLRSSLHGARVYIDVINTGTPIPQEERAMIFEPFFQGSHQRKGAVKGSGLGLSIARDCIRRMQGELYLVDESGQDVCFRIELPSSKNTK.

Residues 1 to 13 (MKRWPVFPRSLRQ) lie on the Cytoplasmic side of the membrane. A helical transmembrane segment spans residues 14–34 (LVMLAFLLILLPLLVLAWQAW). The Periplasmic segment spans residues 35 to 173 (QSLNALSDQA…LQREIAERGQ (139 aa)). Residues 174–194 (YFGWQSLVLFLVSLVMVLLFT) traverse the membrane as a helical segment. The Cytoplasmic segment spans residues 195 to 475 (RMIIGPVKNI…IELPSSKNTK (281 aa)). A Histidine kinase domain is found at 256-472 (HLSHELKTPL…CFRIELPSSK (217 aa)). A Phosphohistidine; by autocatalysis modification is found at His259.

Autophosphorylated.

It is found in the cell inner membrane. It carries out the reaction ATP + protein L-histidine = ADP + protein N-phospho-L-histidine.. Member of the two-component regulatory system GlrR/GlrK that up-regulates transcription of the glmY sRNA when cells enter the stationary growth phase. Activates GlrR by phosphorylation. This is Sensor histidine kinase GlrK (glrK) from Escherichia coli (strain K12).